The primary structure comprises 406 residues: Cysteine desulfurase (406 aa).

Lys226 carries the N6-(pyridoxal phosphate)lysine modification. The Cysteine persulfide intermediate role is filled by Cys364.

The protein belongs to the class-V pyridoxal-phosphate-dependent aminotransferase family. Csd subfamily. As to quaternary structure, homodimer. Interacts with SufE and the SufBCD complex composed of SufB, SufC and SufD. The interaction with SufE is required to mediate the direct transfer of the sulfur atom from the S-sulfanylcysteine. The cofactor is pyridoxal 5'-phosphate.

It is found in the cytoplasm. It catalyses the reaction (sulfur carrier)-H + L-cysteine = (sulfur carrier)-SH + L-alanine. The catalysed reaction is L-selenocysteine + AH2 = hydrogenselenide + L-alanine + A + H(+). It functions in the pathway cofactor biosynthesis; iron-sulfur cluster biosynthesis. Functionally, cysteine desulfurases mobilize the sulfur from L-cysteine to yield L-alanine, an essential step in sulfur metabolism for biosynthesis of a variety of sulfur-containing biomolecules. Component of the suf operon, which is activated and required under specific conditions such as oxidative stress and iron limitation. Acts as a potent selenocysteine lyase in vitro, that mobilizes selenium from L-selenocysteine. Selenocysteine lyase activity is however unsure in vivo. This chain is Cysteine desulfurase, found in Yersinia pseudotuberculosis serotype IB (strain PB1/+).